The primary structure comprises 337 residues: Biotin synthase 1 (337 aa).

The segment at 1 to 23 (MSSVLTQPLAFHPPRPAVQPREH) is disordered. Residues 57 to 284 (TRVEFATLLS…TARVRLSAGR (228 aa)) enclose the Radical SAM core domain. [4Fe-4S] cluster is bound by residues Cys-72, Cys-76, and Cys-79. Residues Cys-116, Cys-147, Cys-207, and Arg-279 each contribute to the [2Fe-2S] cluster site.

The protein belongs to the radical SAM superfamily. Biotin synthase family. In terms of assembly, homodimer. [4Fe-4S] cluster is required as a cofactor. It depends on [2Fe-2S] cluster as a cofactor.

It catalyses the reaction (4R,5S)-dethiobiotin + (sulfur carrier)-SH + 2 reduced [2Fe-2S]-[ferredoxin] + 2 S-adenosyl-L-methionine = (sulfur carrier)-H + biotin + 2 5'-deoxyadenosine + 2 L-methionine + 2 oxidized [2Fe-2S]-[ferredoxin]. It functions in the pathway cofactor biosynthesis; biotin biosynthesis; biotin from 7,8-diaminononanoate: step 2/2. Its function is as follows. Catalyzes the conversion of dethiobiotin (DTB) to biotin by the insertion of a sulfur atom into dethiobiotin via a radical-based mechanism. This Polaromonas sp. (strain JS666 / ATCC BAA-500) protein is Biotin synthase 1.